We begin with the raw amino-acid sequence, 507 residues long: ATP synthase subunit alpha, chloroplastic (507 aa).

Residue 170-177 (GDRQTGKT) coordinates ATP.

It belongs to the ATPase alpha/beta chains family. In terms of assembly, F-type ATPases have 2 components, CF(1) - the catalytic core - and CF(0) - the membrane proton channel. CF(1) has five subunits: alpha(3), beta(3), gamma(1), delta(1), epsilon(1). CF(0) has four main subunits: a, b, b' and c.

Its subcellular location is the plastid. It is found in the chloroplast thylakoid membrane. It catalyses the reaction ATP + H2O + 4 H(+)(in) = ADP + phosphate + 5 H(+)(out). Its function is as follows. Produces ATP from ADP in the presence of a proton gradient across the membrane. The alpha chain is a regulatory subunit. This is ATP synthase subunit alpha, chloroplastic from Oenothera glazioviana (Large-flowered evening primrose).